A 94-amino-acid polypeptide reads, in one-letter code: Pyrimidine/purine nucleoside phosphorylase (94 aa).

It belongs to the nucleoside phosphorylase PpnP family.

It catalyses the reaction a purine D-ribonucleoside + phosphate = a purine nucleobase + alpha-D-ribose 1-phosphate. The enzyme catalyses adenosine + phosphate = alpha-D-ribose 1-phosphate + adenine. It carries out the reaction cytidine + phosphate = cytosine + alpha-D-ribose 1-phosphate. The catalysed reaction is guanosine + phosphate = alpha-D-ribose 1-phosphate + guanine. It catalyses the reaction inosine + phosphate = alpha-D-ribose 1-phosphate + hypoxanthine. The enzyme catalyses thymidine + phosphate = 2-deoxy-alpha-D-ribose 1-phosphate + thymine. It carries out the reaction uridine + phosphate = alpha-D-ribose 1-phosphate + uracil. The catalysed reaction is xanthosine + phosphate = alpha-D-ribose 1-phosphate + xanthine. In terms of biological role, catalyzes the phosphorolysis of diverse nucleosides, yielding D-ribose 1-phosphate and the respective free bases. Can use uridine, adenosine, guanosine, cytidine, thymidine, inosine and xanthosine as substrates. Also catalyzes the reverse reactions. The chain is Pyrimidine/purine nucleoside phosphorylase from Salmonella agona (strain SL483).